The sequence spans 330 residues: Beta-hexosaminidase (330 aa).

Substrate contacts are provided by residues Asp62, Arg70, Arg130, and Lys160–His161. His173 acts as the Proton donor/acceptor in catalysis. Asp242 acts as the Nucleophile in catalysis.

It belongs to the glycosyl hydrolase 3 family. NagZ subfamily.

It localises to the cytoplasm. The catalysed reaction is Hydrolysis of terminal non-reducing N-acetyl-D-hexosamine residues in N-acetyl-beta-D-hexosaminides.. It functions in the pathway cell wall biogenesis; peptidoglycan recycling. In terms of biological role, plays a role in peptidoglycan recycling by cleaving the terminal beta-1,4-linked N-acetylglucosamine (GlcNAc) from peptide-linked peptidoglycan fragments, giving rise to free GlcNAc, anhydro-N-acetylmuramic acid and anhydro-N-acetylmuramic acid-linked peptides. In Vibrio cholerae serotype O1 (strain ATCC 39541 / Classical Ogawa 395 / O395), this protein is Beta-hexosaminidase.